The chain runs to 389 residues: Large envelope protein (389 aa).

2 stretches are compositionally biased toward polar residues: residues Met1 to Pro10 and Ser85 to Thr95. Disordered stretches follow at residues Met1–Leu54 and Ile73–Pro106. A lipid anchor (N-myristoyl glycine; by host) is attached at Gly2. The tract at residues Gly2–Ala108 is pre-S1. The pre-S stretch occupies residues Gly2–Asn163. The Virion surface; in external conformation portion of the chain corresponds to Gly2–Gly170. Residues Gly2–Gly242 lie on the Intravirion; in internal conformation side of the membrane. The interval Val109–Asn163 is pre-S2. A helical transmembrane segment spans residues Phe171 to Ile191. Residues Pro192–Gly242 are Intravirion; in external conformation-facing. The helical transmembrane segment at Phe243–Tyr263 threads the bilayer. Topologically, residues Gln264 to Ser337 are virion surface. N-linked (GlcNAc...) asparagine; by host glycosylation occurs at Asn309. A helical transmembrane segment spans residues Leu338–Ile358. Residues Trp359 to Trp364 are Intravirion-facing. The helical transmembrane segment at Gly365–Val387 threads the bilayer. Topologically, residues Tyr388 to Ile389 are virion surface.

The protein belongs to the orthohepadnavirus major surface antigen family. As to quaternary structure, li-HBsAg interacts with capsid protein and with HDV Large delta antigen. Isoform M associates with host chaperone CANX through its pre-S2 N glycan. This association may be essential for M proper secretion. Isoform M is N-terminally acetylated by host at a ratio of 90%, and N-glycosylated by host at the pre-S2 region. Post-translationally, myristoylated.

Its subcellular location is the virion membrane. In terms of biological role, the large envelope protein exists in two topological conformations, one which is termed 'external' or Le-HBsAg and the other 'internal' or Li-HBsAg. In its external conformation the protein attaches the virus to cell receptors and thereby initiating infection. This interaction determines the species specificity and liver tropism. This attachment induces virion internalization predominantly through caveolin-mediated endocytosis. The large envelope protein also assures fusion between virion membrane and endosomal membrane. In its internal conformation the protein plays a role in virion morphogenesis and mediates the contact with the nucleocapsid like a matrix protein. Functionally, the middle envelope protein plays an important role in the budding of the virion. It is involved in the induction of budding in a nucleocapsid independent way. In this process the majority of envelope proteins bud to form subviral lipoprotein particles of 22 nm of diameter that do not contain a nucleocapsid. The protein is Large envelope protein of Homo sapiens (Human).